Here is a 402-residue protein sequence, read N- to C-terminus: Protein FixF (402 aa).

The chain is Protein FixF (fixF) from Sinorhizobium fredii (strain NBRC 101917 / NGR234).